The following is a 255-amino-acid chain: Membrane protein insertase YidC 2 (255 aa).

The first 20 residues, 1–20 (MKKKLGLLAMVVALMAITAG), serve as a signal peptide directing secretion. Cysteine 21 is lipidated: N-palmitoyl cysteine. Residue cysteine 21 is the site of S-diacylglycerol cysteine attachment. Helical transmembrane passes span 59–79 (YGLA…PLMI), 129–149 (LAGC…YHAI), 160–180 (FLWF…VAAI), 202–222 (MMLW…PAAL), and 223–243 (SLYW…IKGP).

This sequence belongs to the OXA1/ALB3/YidC family. Type 2 subfamily.

The protein localises to the cell membrane. Its function is as follows. Required for the insertion and/or proper folding and/or complex formation of integral membrane proteins into the membrane. Involved in integration of membrane proteins that insert both dependently and independently of the Sec translocase complex, as well as at least some lipoproteins. In Bacillus anthracis, this protein is Membrane protein insertase YidC 2.